The chain runs to 475 residues: Aspartyl/glutamyl-tRNA(Asn/Gln) amidotransferase subunit B (475 aa).

This sequence belongs to the GatB/GatE family. GatB subfamily. Heterotrimer of A, B and C subunits.

It carries out the reaction L-glutamyl-tRNA(Gln) + L-glutamine + ATP + H2O = L-glutaminyl-tRNA(Gln) + L-glutamate + ADP + phosphate + H(+). It catalyses the reaction L-aspartyl-tRNA(Asn) + L-glutamine + ATP + H2O = L-asparaginyl-tRNA(Asn) + L-glutamate + ADP + phosphate + 2 H(+). Its function is as follows. Allows the formation of correctly charged Asn-tRNA(Asn) or Gln-tRNA(Gln) through the transamidation of misacylated Asp-tRNA(Asn) or Glu-tRNA(Gln) in organisms which lack either or both of asparaginyl-tRNA or glutaminyl-tRNA synthetases. The reaction takes place in the presence of glutamine and ATP through an activated phospho-Asp-tRNA(Asn) or phospho-Glu-tRNA(Gln). The polypeptide is Aspartyl/glutamyl-tRNA(Asn/Gln) amidotransferase subunit B (Chromobacterium violaceum (strain ATCC 12472 / DSM 30191 / JCM 1249 / CCUG 213 / NBRC 12614 / NCIMB 9131 / NCTC 9757 / MK)).